The primary structure comprises 158 residues: NAD(P)H-quinone oxidoreductase subunit J, chloroplastic (158 aa).

The protein belongs to the complex I 30 kDa subunit family. As to quaternary structure, NDH is composed of at least 16 different subunits, 5 of which are encoded in the nucleus.

Its subcellular location is the plastid. It localises to the chloroplast thylakoid membrane. The catalysed reaction is a plastoquinone + NADH + (n+1) H(+)(in) = a plastoquinol + NAD(+) + n H(+)(out). It carries out the reaction a plastoquinone + NADPH + (n+1) H(+)(in) = a plastoquinol + NADP(+) + n H(+)(out). Functionally, NDH shuttles electrons from NAD(P)H:plastoquinone, via FMN and iron-sulfur (Fe-S) centers, to quinones in the photosynthetic chain and possibly in a chloroplast respiratory chain. The immediate electron acceptor for the enzyme in this species is believed to be plastoquinone. Couples the redox reaction to proton translocation, and thus conserves the redox energy in a proton gradient. This chain is NAD(P)H-quinone oxidoreductase subunit J, chloroplastic, found in Spinacia oleracea (Spinach).